The primary structure comprises 888 residues: Dilute domain-containing protein YPR089W (888 aa).

Positions 360 to 745 constitute a Dilute domain; that stretch reads DIVLQSYWLS…KKFLNNKIKD (386 aa). Disordered regions lie at residues 462-504, 805-827, and 865-888; these read KEQQ…NNSS, KQRQ…TGDE, and LNIP…QNPW. Composition is skewed to polar residues over residues 809–823 and 867–880; these read NEPQ…TSDF and IPSS…WSNN.

The protein resides in the golgi apparatus. This is Dilute domain-containing protein YPR089W from Saccharomyces cerevisiae (strain ATCC 204508 / S288c) (Baker's yeast).